The primary structure comprises 108 residues: Virulence-associated protein I (108 aa).

The HTH cro/C1-type domain occupies 19–74 (LREEYLKPMGLSAHALAKALHVSPSRINEIVREQRGITADTALRLVRYFGGDAQSW). Positions 30 to 49 (SAHALAKALHVSPSRINEIV) form a DNA-binding region, H-T-H motif.

It belongs to the VapA/VapI family.

The chain is Virulence-associated protein I (vapI) from Dichelobacter nodosus (Bacteroides nodosus).